We begin with the raw amino-acid sequence, 308 residues long: Adult enhancer factor 1 (308 aa).

Disordered stretches follow at residues alanine 50–phenylalanine 94 and glutamine 123–threonine 143. The segment covering glutamine 56–glutamine 76 has biased composition (low complexity). Pro residues predominate over residues proline 81–leucine 90. 4 consecutive C2H2-type zinc fingers follow at residues phenylalanine 184–histidine 206, tyrosine 212–histidine 234, tyrosine 240–histidine 262, and phenylalanine 268–histidine 290.

Found in all tissues examined including the ovary and the fat body.

Its subcellular location is the nucleus. Its function is as follows. Transcriptional repressor that binds specifically to fat body-specific enhancers, namely the adult ADH enhancer (AAE) and the enhancer that controls yolk protein gene expression. The polypeptide is Adult enhancer factor 1 (Aef1) (Drosophila melanogaster (Fruit fly)).